The chain runs to 442 residues: MNELEQWRKDPLVIKLMATEEVFWLNPHIDSFKSAVRKLSLHEDDVKDAEKRLDRFAPYIAKVFPGTNQAHGMIESPLVQIPSMKQSLEQKYLQPITGNLLLKCDSHLPISGSIKARGGIYEVLKHAEQLALQHGLLTVQDDYSILDSETCRDFFANYSIAVGSTGNLGLSIGIISAKLGFNVSVHMSADAKQWKKDLLRSKNVNVIEYEDDYSQAVEEGRREAEQDPTCYFVDDEQSQDLFLGYAVAAFRLKKQLAEQKITVDESHPLFVYLPCGVGGAPGGITFGLKLLFEDHVHCFFAEPTHSPSMLLGLLTGLHERISVQEIGLDNRTEADGLAVGRPSRLVSRLMKPLLSGSFTIDDDKLFTLLKELADAEGLFLEPSALAGMLGPIKLVQEGNHYLKANNLAEKMNNATHIIWGTGGSMVPEEEMMAYYRRGGTIK.

N6-(pyridoxal phosphate)lysine is present on Lys115.

It belongs to the serine/threonine dehydratase family. DsdA subfamily. Pyridoxal 5'-phosphate serves as cofactor.

It carries out the reaction D-serine = pyruvate + NH4(+). In Halalkalibacterium halodurans (strain ATCC BAA-125 / DSM 18197 / FERM 7344 / JCM 9153 / C-125) (Bacillus halodurans), this protein is Probable D-serine dehydratase.